The primary structure comprises 497 residues: Probable malate:quinone oxidoreductase (497 aa).

This sequence belongs to the MQO family. FAD is required as a cofactor.

It catalyses the reaction (S)-malate + a quinone = a quinol + oxaloacetate. The protein operates within carbohydrate metabolism; tricarboxylic acid cycle; oxaloacetate from (S)-malate (quinone route): step 1/1. The polypeptide is Probable malate:quinone oxidoreductase (Rhodopseudomonas palustris (strain TIE-1)).